The following is a 103-amino-acid chain: UPF0145 protein BT9727_3206 (103 aa).

This sequence belongs to the UPF0145 family.

This Bacillus thuringiensis subsp. konkukian (strain 97-27) protein is UPF0145 protein BT9727_3206.